Here is a 520-residue protein sequence, read N- to C-terminus: Putative cytochrome P450 CYP13A3 (520 aa).

Cysteine 464 provides a ligand contact to heme.

The protein belongs to the cytochrome P450 family. The cofactor is heme.

Cytochromes P450 are a group of heme-thiolate monooxygenases. They oxidize a variety of structurally unrelated compounds, including steroids, fatty acids, and xenobiotics. The polypeptide is Putative cytochrome P450 CYP13A3 (cyp-13A3) (Caenorhabditis elegans).